The sequence spans 261 residues: Triosephosphate isomerase (261 aa).

10–12 (NWK) is a substrate binding site. His100 acts as the Electrophile in catalysis. Glu172 acts as the Proton acceptor in catalysis. Residues Gly178, Ser218, and 239-240 (GG) contribute to the substrate site.

It belongs to the triosephosphate isomerase family. In terms of assembly, homodimer.

It is found in the cytoplasm. It carries out the reaction D-glyceraldehyde 3-phosphate = dihydroxyacetone phosphate. It participates in carbohydrate biosynthesis; gluconeogenesis. Its pathway is carbohydrate degradation; glycolysis; D-glyceraldehyde 3-phosphate from glycerone phosphate: step 1/1. Functionally, involved in the gluconeogenesis. Catalyzes stereospecifically the conversion of dihydroxyacetone phosphate (DHAP) to D-glyceraldehyde-3-phosphate (G3P). In Mycobacterium leprae (strain TN), this protein is Triosephosphate isomerase.